The sequence spans 172 residues: S-ribosylhomocysteine lyase (172 aa).

Fe cation contacts are provided by histidine 54, histidine 58, and cysteine 128.

This sequence belongs to the LuxS family. In terms of assembly, homodimer. Fe cation is required as a cofactor.

It catalyses the reaction S-(5-deoxy-D-ribos-5-yl)-L-homocysteine = (S)-4,5-dihydroxypentane-2,3-dione + L-homocysteine. In terms of biological role, involved in the synthesis of autoinducer 2 (AI-2) which is secreted by bacteria and is used to communicate both the cell density and the metabolic potential of the environment. The regulation of gene expression in response to changes in cell density is called quorum sensing. Catalyzes the transformation of S-ribosylhomocysteine (RHC) to homocysteine (HC) and 4,5-dihydroxy-2,3-pentadione (DPD). The polypeptide is S-ribosylhomocysteine lyase (Vibrio alginolyticus).